The chain runs to 323 residues: Acetyl-coenzyme A carboxylase carboxyl transferase subunit alpha (323 aa).

The CoA carboxyltransferase C-terminal domain maps to 39-293; that stretch reads RLSKKSQQLT…RRALADSLRQ (255 aa).

This sequence belongs to the AccA family. As to quaternary structure, acetyl-CoA carboxylase is a heterohexamer composed of biotin carboxyl carrier protein (AccB), biotin carboxylase (AccC) and two subunits each of ACCase subunit alpha (AccA) and ACCase subunit beta (AccD).

The protein resides in the cytoplasm. The enzyme catalyses N(6)-carboxybiotinyl-L-lysyl-[protein] + acetyl-CoA = N(6)-biotinyl-L-lysyl-[protein] + malonyl-CoA. It participates in lipid metabolism; malonyl-CoA biosynthesis; malonyl-CoA from acetyl-CoA: step 1/1. Functionally, component of the acetyl coenzyme A carboxylase (ACC) complex. First, biotin carboxylase catalyzes the carboxylation of biotin on its carrier protein (BCCP) and then the CO(2) group is transferred by the carboxyltransferase to acetyl-CoA to form malonyl-CoA. This Burkholderia multivorans (strain ATCC 17616 / 249) protein is Acetyl-coenzyme A carboxylase carboxyl transferase subunit alpha.